Here is a 608-residue protein sequence, read N- to C-terminus: Histone-arginine methyltransferase CARM1 (608 aa).

Positions 28–139 are interaction with C9orf72; that stretch reads ATVSVFPGAR…GHTLERSVFS (112 aa). In terms of domain architecture, SAM-dependent MTase PRMT-type spans 147–454; that stretch reads AVQYFQFYGY…KRQSYDISIV (308 aa). Gln-160, Arg-169, Gly-193, and Glu-215 together coordinate S-adenosyl-L-methionine. Ser-217 is subject to Phosphoserine. Residue Lys-228 forms a Glycyl lysine isopeptide (Lys-Gly) (interchain with G-Cter in ubiquitin) linkage. 2 residues coordinate S-adenosyl-L-methionine: Glu-244 and Ser-272. Positions 347-380 are required for nuclear translocation; it reads RILMAKSVKYTVNFLEAKEGDLHRIEIPFKFHML. The tract at residues 500-608 is transactivation domain; the sequence is TGSTYNLSSG…IPTNTMHYGS (109 aa). A Dimethylated arginine modification is found at Arg-551.

The protein belongs to the class I-like SAM-binding methyltransferase superfamily. Protein arginine N-methyltransferase family. As to quaternary structure, homodimer. Interacts with NR1H4. Interacts with SNRPC. Interacts with the C-terminus of NCOA2/GRIP1, NCO3/ACTR and NCOA1/SRC1. Part of a complex consisting of CARM1, EP300/P300 and NCOA2/GRIP1. Interacts with FLII, TP53, myogenic factor MEF2, EP300/P300, TRIM24, CREBBP and CTNNB1. Interacts with RELA. Identified in a complex containing CARM1, TRIM24 and NCOA2/GRIP1. Interacts with NCOA3/SRC3. Interacts with SKP2. Interacts (via PH domain-like fold) with C9orf72. Interacts with PARP1; promoting PARP1 recruimtent to replication forks. In terms of processing, phosphorylation at Ser-217 is strongly increased during mitosis, and decreases rapidly to a very low, basal level after entry into the G1 phase of the cell cycle. Phosphorylation at Ser-217 interferes with S-adenosyl-L-methionine binding and strongly reduces methyltransferase activity. Phosphorylation at Ser-217 may promote cytosolic location. Auto-methylated on Arg-551. Methylation enhances transcription coactivator activity. Methylation is required for its role in the regulation of pre-mRNA alternative splicing. Post-translationally, ubiquitinated by E3 ubiquitin-protein ligase complex containing FBXO9 at Lys-228; leading to proteasomal degradation. As to expression, ubiquitously expressed. Within the brain, present in proliferating cells from lateral ventricular zone and dentate gyrus (at protein level).

It localises to the nucleus. The protein resides in the cytoplasm. Its subcellular location is the chromosome. The catalysed reaction is L-arginyl-[protein] + 2 S-adenosyl-L-methionine = N(omega),N(omega)-dimethyl-L-arginyl-[protein] + 2 S-adenosyl-L-homocysteine + 2 H(+). With respect to regulation, methylation of H3R17 (H3R17me) by CARM1 is stimulated by preacetylation of H3 'Lys-18' (H3K18ac) H3 'Lys-23' (H3K23ac) by EP300 and blocked by citrullination of H3 'Arg-17' (H3R17ci) by PADI4. In terms of biological role, methylates (mono- and asymmetric dimethylation) the guanidino nitrogens of arginyl residues in several proteins involved in DNA packaging, transcription regulation, pre-mRNA splicing, and mRNA stability. Recruited to promoters upon gene activation together with histone acetyltransferases from EP300/P300 and p160 families, methylates histone H3 at 'Arg-17' (H3R17me), forming mainly asymmetric dimethylarginine (H3R17me2a), leading to activation of transcription via chromatin remodeling. During nuclear hormone receptor activation and TCF7L2/TCF4 activation, acts synergically with EP300/P300 and either one of the p160 histone acetyltransferases NCOA1/SRC1, NCOA2/GRIP1 and NCOA3/ACTR or CTNNB1/beta-catenin to activate transcription. During myogenic transcriptional activation, acts together with NCOA3/ACTR as a coactivator for MEF2C. During monocyte inflammatory stimulation, acts together with EP300/P300 as a coactivator for NF-kappa-B. Acts as a coactivator for PPARG, promotes adipocyte differentiation and the accumulation of brown fat tissue. Plays a role in the regulation of pre-mRNA alternative splicing by methylation of splicing factors. Also seems to be involved in p53/TP53 transcriptional activation. Methylates EP300/P300, both at 'Arg-2142', which may loosen its interaction with NCOA2/GRIP1, and at 'Arg-580' and 'Arg-604' in the KIX domain, which impairs its interaction with CREB and inhibits CREB-dependent transcriptional activation. Also methylates arginine residues in RNA-binding proteins PABPC1, ELAVL1 and ELAV4, which may affect their mRNA-stabilizing properties and the half-life of their target mRNAs. Acts as a transcriptional coactivator of ACACA/acetyl-CoA carboxylase by enriching H3R17 methylation at its promoter, thereby positively regulating fatty acid synthesis. Independently of its methyltransferase activity, involved in replication fork progression: promotes PARP1 recruitment to replication forks, leading to poly-ADP-ribosylation of chromatin at replication forks and reduced fork speed. The sequence is that of Histone-arginine methyltransferase CARM1 (Carm1) from Mus musculus (Mouse).